Consider the following 223-residue polypeptide: Phosphoribosylformylglycinamidine synthase subunit PurQ (223 aa).

The 221-residue stretch at Ser3–Ala223 folds into the Glutamine amidotransferase type-1 domain. Cys86 functions as the Nucleophile in the catalytic mechanism. Active-site residues include His196 and Glu198.

Part of the FGAM synthase complex composed of 1 PurL, 1 PurQ and 2 PurS subunits.

It is found in the cytoplasm. The enzyme catalyses N(2)-formyl-N(1)-(5-phospho-beta-D-ribosyl)glycinamide + L-glutamine + ATP + H2O = 2-formamido-N(1)-(5-O-phospho-beta-D-ribosyl)acetamidine + L-glutamate + ADP + phosphate + H(+). It carries out the reaction L-glutamine + H2O = L-glutamate + NH4(+). Its pathway is purine metabolism; IMP biosynthesis via de novo pathway; 5-amino-1-(5-phospho-D-ribosyl)imidazole from N(2)-formyl-N(1)-(5-phospho-D-ribosyl)glycinamide: step 1/2. In terms of biological role, part of the phosphoribosylformylglycinamidine synthase complex involved in the purines biosynthetic pathway. Catalyzes the ATP-dependent conversion of formylglycinamide ribonucleotide (FGAR) and glutamine to yield formylglycinamidine ribonucleotide (FGAM) and glutamate. The FGAM synthase complex is composed of three subunits. PurQ produces an ammonia molecule by converting glutamine to glutamate. PurL transfers the ammonia molecule to FGAR to form FGAM in an ATP-dependent manner. PurS interacts with PurQ and PurL and is thought to assist in the transfer of the ammonia molecule from PurQ to PurL. The protein is Phosphoribosylformylglycinamidine synthase subunit PurQ of Rhizobium johnstonii (strain DSM 114642 / LMG 32736 / 3841) (Rhizobium leguminosarum bv. viciae).